A 366-amino-acid chain; its full sequence is Chorismate synthase (366 aa).

Arg-47 contributes to the NADP(+) binding site. FMN contacts are provided by residues 124-126, Gly-286, 301-305, and Arg-327; these read RSS and KPVAT.

This sequence belongs to the chorismate synthase family. In terms of assembly, homotetramer. FMNH2 serves as cofactor.

The enzyme catalyses 5-O-(1-carboxyvinyl)-3-phosphoshikimate = chorismate + phosphate. Its pathway is metabolic intermediate biosynthesis; chorismate biosynthesis; chorismate from D-erythrose 4-phosphate and phosphoenolpyruvate: step 7/7. In terms of biological role, catalyzes the anti-1,4-elimination of the C-3 phosphate and the C-6 proR hydrogen from 5-enolpyruvylshikimate-3-phosphate (EPSP) to yield chorismate, which is the branch point compound that serves as the starting substrate for the three terminal pathways of aromatic amino acid biosynthesis. This reaction introduces a second double bond into the aromatic ring system. In Methylacidiphilum infernorum (isolate V4) (Methylokorus infernorum (strain V4)), this protein is Chorismate synthase.